We begin with the raw amino-acid sequence, 2752 residues long: Piezo-type mechanosensitive ion channel component 2 (2752 aa).

Topologically, residues Met1–Arg12 are cytoplasmic. A helical membrane pass occupies residues Leu13 to Ala24. Over Phe25–Leu30 the chain is Extracellular. A helical transmembrane segment spans residues Ser31–Leu43. Over Phe44–Thr50 the chain is Cytoplasmic. A helical membrane pass occupies residues Thr51–Ile76. Topologically, residues Phe77 to Val122 are extracellular. N-linked (GlcNAc...) asparagine glycosylation is present at Asn95. The chain crosses the membrane as a helical span at residues Phe123–Arg141. Topologically, residues Asn142–Thr221 are cytoplasmic. A helical transmembrane segment spans residues Ala222–Met237. Residues Leu238–Ser240 are Extracellular-facing. The helical transmembrane segment at Leu241 to Ser258 threads the bilayer. Residues Trp259–Asp264 are Cytoplasmic-facing. The helical transmembrane segment at Pro265–Tyr287 threads the bilayer. Residues Leu288–His335 lie on the Extracellular side of the membrane. Residues Ala336 to Trp355 traverse the membrane as a helical segment. Residues Leu356 to Val492 lie on the Cytoplasmic side of the membrane. The interval Ser446–Arg478 is disordered. A compositionally biased stretch (acidic residues) spans Glu463–Glu474. Residues Phe493–Thr514 form a helical membrane-spanning segment. Over Tyr515–Leu519 the chain is Extracellular. The chain crosses the membrane as a helical span at residues Thr520 to Trp531. The Cytoplasmic portion of the chain corresponds to Met532–Asn535. A helical membrane pass occupies residues Arg536–Ser562. Over Phe563 to Leu583 the chain is Extracellular. A helical transmembrane segment spans residues Ala584–Leu614. At Ser615–Lys685 the chain is on the cytoplasmic side. The segment covering Glu623–Gln632 has biased composition (acidic residues). The interval Glu623 to Glu664 is disordered. Over residues Lys649–Gln660 the composition is skewed to basic and acidic residues. Residues Tyr686 to Ser699 traverse the membrane as a helical segment. The Extracellular segment spans residues Phe700–Val705. The chain crosses the membrane as a helical span at residues Met706 to Val724. Topologically, residues His725–Leu733 are cytoplasmic. The chain crosses the membrane as a helical span at residues Lys734–Thr753. The Extracellular segment spans residues Tyr754 to Ala785. A helical transmembrane segment spans residues Glu786–Tyr807. Residues Phe808–Leu940 lie on the Cytoplasmic side of the membrane. Ser838 is subject to Phosphoserine. The segment covering Pro862 to Ser883 has biased composition (basic and acidic residues). Residues Pro862 to Thr902 are disordered. Acidic residues predominate over residues Glu884–Thr902. The chain crosses the membrane as a helical span at residues His941–Lys956. Topologically, residues Glu957–Asn962 are extracellular. The helical transmembrane segment at Tyr963 to Ala972 threads the bilayer. Over Leu973–Arg980 the chain is Cytoplasmic. Residues Leu981 to Gln1001 traverse the membrane as a helical segment. Residues Leu1002 to Leu1057 lie on the Extracellular side of the membrane. N-linked (GlcNAc...) asparagine glycosylation occurs at Asn1013. Residues Cys1014 and Cys1192 are joined by a disulfide bond. The chain crosses the membrane as a helical span at residues Arg1058 to Gly1082. The Cytoplasmic segment spans residues Arg1083 to Gly1123. The helical transmembrane segment at Leu1124–Arg1138 threads the bilayer. The Extracellular segment spans residues Met1139–Asp1140. The helical transmembrane segment at Phe1141–Leu1154 threads the bilayer. Residues Tyr1155–Ile1165 are Cytoplasmic-facing. Residues Trp1166–Ile1185 form a helical membrane-spanning segment. Topologically, residues Gly1186–Asn1222 are extracellular. The chain crosses the membrane as a helical span at residues Pro1223–Phe1243. The Cytoplasmic segment spans residues Glu1244–Leu1297. The helical transmembrane segment at Phe1298 to Thr1310 threads the bilayer. The Extracellular segment spans residues Thr1311–Phe1316. The helical transmembrane segment at Cys1317 to Leu1329 threads the bilayer. Residues Phe1330–Pro1338 are Cytoplasmic-facing. The chain crosses the membrane as a helical span at residues Ile1339–Ser1364. Residues Ile1365–Ile1413 are Extracellular-facing. The chain crosses the membrane as a helical span at residues Trp1414–Met1430. Topologically, residues Ser1431–Arg1921 are cytoplasmic. A coiled-coil region spans residues Thr1458–Lys1529. Disordered regions lie at residues Gln1488–Gln1534, Ala1593–Asp1636, and Ser1844–Ser1868. The segment covering Leu1594 to Gly1615 has biased composition (basic residues). Residues Ser1922–Val1936 traverse the membrane as a helical segment. Residues Ser1937 to Leu1943 lie on the Extracellular side of the membrane. A helical transmembrane segment spans residues Leu1944–Leu1955. Over Ser1956 to Ser1961 the chain is Cytoplasmic. A helical transmembrane segment spans residues Arg1962 to Gln1983. Residues Phe1984–Val2016 are Extracellular-facing. A helical membrane pass occupies residues Leu2017–Cys2035. Residues His2036–Val2189 are Cytoplasmic-facing. Disordered stretches follow at residues Ser2047 to Asp2069 and Gln2090 to Ser2135. The span at Gly2100–Ser2127 shows a compositional bias: low complexity. Residues Tyr2190 to Trp2209 traverse the membrane as a helical segment. Residues Ala2210–Gly2231 lie on the Extracellular side of the membrane. A helical membrane pass occupies residues Pro2232 to Leu2252. The Cytoplasmic segment spans residues Arg2253–Val2256. Residues Leu2257–Gly2280 form a helical membrane-spanning segment. The Extracellular portion of the chain corresponds to Val2281 to Asn2289. Residues Leu2290–Cys2312 traverse the membrane as a helical segment. At Gly2313–Lys2397 the chain is on the cytoplasmic side. A helical membrane pass occupies residues Lys2398 to Leu2421. At Phe2422–Gly2669 the chain is on the extracellular side. The helical transmembrane segment at Ile2670–Ser2690 threads the bilayer. The Cytoplasmic portion of the chain corresponds to Gly2691–Asn2752.

It belongs to the PIEZO (TC 1.A.75) family. In terms of assembly, homotrimer; the homotrimer forms a propeller-shaped Piezo channel with a cation-ion conducting pore. Heterotrimeric interaction may occur between PIEZO1 and PIEZO2. Interacts with STOML3. Interacts with TMC7; the interaction inhibits PIEZO2-conducted mechanically activated currents. Interacts with TMC1; the interaction may be part of the MET complex. Interacts with MDFIC (via C-terminus); the interaction prolongs Piezo channel inactivation. Interacts with MDFI (via C-terminus); the interaction prolongs Piezo channel inactivation.

The protein localises to the cell membrane. It catalyses the reaction Ca(2+)(in) = Ca(2+)(out). With respect to regulation, regulated by auxillary subunits MDFIC and MDFI. Channel activity is inhibited by TMEM120A. Phosphatidic acid and lysophosphatidic acid inhibit PIEZO2 channel activity. Pore-forming subunit of the mechanosensitive non-specific cation Piezo channel required for rapidly adapting mechanically activated (MA) currents and has a key role in sensing touch and tactile pain. Piezo channels are homotrimeric three-blade propeller-shaped structures that utilize a cap-motion and plug-and-latch mechanism to gate their ion-conducting pathways. Expressed in sensory neurons, is essential for diverse physiological processes, including respiratory control, systemic metabolism, urinary function, and proprioception. Mediates airway stretch sensing, enabling efficient respiration at birth and maintaining normal breathing in adults. It regulates brown and beige adipose tissue morphology and function, preventing systemic hypermetabolism. In the lower urinary tract, acts as a sensor in both the bladder urothelium and innervating sensory neurons being required for bladder-stretch sensing and urethral micturition reflexes, ensuring proper urinary function. Additionally, PIEZO2 serves as the principal mechanotransducer in proprioceptors, facilitating proprioception and coordinated body movements. In inner ear hair cells, PIEZO1/2 subunits may constitute part of the mechanotransducer (MET) non-selective cation channel complex where they may act as pore-forming ion-conducting component in the complex. Required for Merkel-cell mechanotransduction. Plays a major role in light-touch mechanosensation. The chain is Piezo-type mechanosensitive ion channel component 2 from Homo sapiens (Human).